We begin with the raw amino-acid sequence, 94 residues long: Protein RESPONSE TO LOW SULFUR 1 (94 aa).

Residues 8 to 35 (VTVAAEEMDELRRRNIELSREVAEMKTE) adopt a coiled-coil conformation.

The protein is Protein RESPONSE TO LOW SULFUR 1 of Arabidopsis thaliana (Mouse-ear cress).